The following is a 318-amino-acid chain: MALPIIVKWGGQEYSVTTLSEDDTVLDLKQFLKTLTGVLPERQKLLGLKVKGKPAENDVKLGALKLKPNTKIMMMGTREESLEDVLGPPPDNDDVVNDFDIEDEVVEVENREENLLKISRRVKEYKVEILNPPREGKKLLVLDVDYTLFDHRSCAETGVELMRPYLHEFLTSAYEDYDIVIWSATNMKWIEAKMKELGVSTNANYKITFMLDSAAMITVHTPRRGLIDVKPLGVIWGKFSEFYSKKNTIMFDDIGRNFLMNPQNGLKIRPFMKAHLNRDKDKELLKLTQYLKEIAKLDDFLDLNHKYWERYLSKKQGQ.

Ala-2 carries the post-translational modification N-acetylalanine. Residues 3 to 81 (LPIIVKWGGQ…IMMMGTREES (79 aa)) form the Ubiquitin-like domain. Position 117 is an N6-acetyllysine (Lys-117). Residues 133–294 (PREGKKLLVL…LKLTQYLKEI (162 aa)) form the FCP1 homology domain. Residues Asp-143, Asp-145, and Asp-253 each contribute to the Mg(2+) site.

It depends on Mg(2+) as a cofactor.

It localises to the nucleus. The catalysed reaction is O-phospho-L-seryl-[protein] + H2O = L-seryl-[protein] + phosphate. The enzyme catalyses O-phospho-L-threonyl-[protein] + H2O = L-threonyl-[protein] + phosphate. In terms of biological role, dephosphorylates 26S nuclear proteasomes, thereby decreasing their proteolytic activity. Recruited to the 19S regulatory particle of the 26S proteasome through its interaction with 19S component PSMD2/RPN1. Once recruited, dephosphorylates 19S component PSMC2/RPT1 which impairs PSMC2 ATPase activity and disrupts 26S proteasome assembly. Has also been reported to stimulate the proteolytic activity of the 26S proteasome. The sequence is that of Ubiquitin-like domain-containing CTD phosphatase 1 (UBLCP1) from Bos taurus (Bovine).